The primary structure comprises 105 residues: UPF0145 protein VP1283 (105 aa).

Belongs to the UPF0145 family.

In Vibrio parahaemolyticus serotype O3:K6 (strain RIMD 2210633), this protein is UPF0145 protein VP1283.